Here is a 96-residue protein sequence, read N- to C-terminus: Probable Fe(2+)-trafficking protein (96 aa).

Residues 21-40 (LPKMPHPPFPNKKGQELQET) are disordered.

It belongs to the Fe(2+)-trafficking protein family.

Functionally, could be a mediator in iron transactions between iron acquisition and iron-requiring processes, such as synthesis and/or repair of Fe-S clusters in biosynthetic enzymes. This Psychrobacter arcticus (strain DSM 17307 / VKM B-2377 / 273-4) protein is Probable Fe(2+)-trafficking protein.